A 1064-amino-acid polypeptide reads, in one-letter code: Ribosome quality control complex subunit NEMF (1064 aa).

T7 is modified (phosphothreonine). A coiled-coil region spans residues 296–359; the sequence is VDEFYSKIEG…LIEMNLQIVD (64 aa). The residue at position 417 (S417) is a Phosphoserine. The disordered stretch occupies residues 420-451; sequence EDGDGDASIENSDAEAPKGKKKKQKNKQLQKP. Residues 438-447 are compositionally biased toward basic residues; sequence GKKKKQKNKQ. A coiled-coil region spans residues 481–512; sequence AAKKTQRTVEAAEKAFKSAEKKTKQTLKEVQT. Over residues 694–707 the composition is skewed to acidic residues; sequence EQLEGGDSSEEETE. 2 disordered regions span residues 694–718 and 731–973; these read EQLE…DVEL and SGRD…SLTG. A compositionally biased stretch (basic and acidic residues) spans 731–756; sequence SGRDELSSEDGEAKAVTKDQEPIGEM. S737 bears the Phosphoserine mark. The segment covering 771-781 has biased composition (polar residues); it reads IDLSHLQSQRP. Basic and acidic residues predominate over residues 828–839; that stretch reads IEEKDKERESAV. Residues 858 to 882 are a coiled coil; it reads KRGQKSKMKKMKEKYKDQDDEDREL. Positions 859-870 are enriched in basic residues; the sequence is RGQKSKMKKMKE. Positions 947-959 are enriched in basic and acidic residues; it reads DDPHDDKEEHDLD. Positions 960 to 973 are enriched in polar residues; the sequence is QQGNEENLFDSLTG.

Belongs to the NEMF family. As to quaternary structure, component of the ribosome quality control complex (RQC), composed of the E3 ubiquitin ligase LTN1, TCF25 and NEMF associated with the 60S ribosomal subunit. The complex probably also contains VCP/p97 and its ubiquitin-binding cofactors. Interacts (via its N-terminus) with XPO1.

It is found in the cytoplasm. Its subcellular location is the cytosol. It localises to the nucleus. Its function is as follows. Key component of the ribosome quality control complex (RQC), a ribosome-associated complex that mediates the extraction of incompletely synthesized nascent chains from stalled ribosomes as well as their ubiquitin-mediated proteasomal degradation. Thereby, frees 60S subunit ribosomes from the stalled translation complex and prevents the accumulation of nascent polypeptide chains that are potentially toxic for the cell. Within the RQC complex, NEMF specifically binds stalled 60S ribosomal subunits by recognizing an exposed, nascent chain-conjugated tRNA moiety and promotes the recruitment of LTN1 to stalled 60S subunits. Following binding to stalled 60S ribosomal subunits, NEMF mediates CAT tailing by recruiting alanine-charged tRNA to the A-site and directing the elongation of stalled nascent chains independently of mRNA or 40S subunits, leading to non-templated C-terminal alanine extensions (CAT tails). Mainly recruits alanine-charged tRNAs, but can also other amino acid-charged tRNAs. CAT tailing is required to promote ubiquitination of stalled nascent chains by different E3 ubiquitin-protein ligases. In the canonical RQC pathway (RQC-L), CAT tailing facilitates LTN1-dependent ubiquitination by exposing lysine residues that would otherwise remain buried in the ribosomal exit tunnel. In the alternative RQC pathway (RQC-C) CAT tailing creates an C-degron mainly composed of alanine that is recognized by the CRL2(KLHDC10) and RCHY1/PIRH2 E3 ligases, leading to ubiquitination and degradation of stalled nascent chains. NEMF may also indirectly play a role in nuclear export. The polypeptide is Ribosome quality control complex subunit NEMF (Mus musculus (Mouse)).